We begin with the raw amino-acid sequence, 209 residues long: Thymidylate kinase (209 aa).

Position 7–14 (7–14 (GIDGAGKS)) interacts with ATP.

This sequence belongs to the thymidylate kinase family.

The catalysed reaction is dTMP + ATP = dTDP + ADP. Functionally, phosphorylation of dTMP to form dTDP in both de novo and salvage pathways of dTTP synthesis. This is Thymidylate kinase from Mycoplasma mobile (strain ATCC 43663 / 163K / NCTC 11711) (Mesomycoplasma mobile).